An 852-amino-acid chain; its full sequence is 2-deoxy-glucose resistant protein 2 (852 aa).

Residues 1–18 (MFKSKTSTLSYDETPNSN) are compositionally biased toward polar residues. The segment at 1–60 (MFKSKTSTLSYDETPNSNEGDRNATPVNPKEKSQTKHLNIPGDRSRHSSIADSKRSSSRY) is disordered. WD repeat units lie at residues 171 to 210 (LFKN…VKRS), 278 to 316 (EHAL…SLKT), 318 to 358 (VHPD…VSYA), 426 to 471 (QHGP…ELFK), 476 to 515 (GSSR…LSAE), and 651 to 689 (GFSS…EIRK). At Ser716 the chain carries Phosphoserine. The disordered stretch occupies residues 723–748 (DERSSTEDNEFSTTPPSNTHNSRPSH). Over residues 733–744 (FSTTPPSNTHNS) the composition is skewed to polar residues.

This sequence belongs to the WD repeat DGR2 family.

The sequence is that of 2-deoxy-glucose resistant protein 2 (DGR2) from Saccharomyces cerevisiae (strain ATCC 204508 / S288c) (Baker's yeast).